The sequence spans 206 residues: Ribosomal RNA small subunit methyltransferase G (206 aa).

S-adenosyl-L-methionine contacts are provided by residues G74, L79, V125–E126, and R140.

This sequence belongs to the methyltransferase superfamily. RNA methyltransferase RsmG family.

The protein localises to the cytoplasm. It carries out the reaction guanosine(527) in 16S rRNA + S-adenosyl-L-methionine = N(7)-methylguanosine(527) in 16S rRNA + S-adenosyl-L-homocysteine. Its function is as follows. Specifically methylates the N7 position of guanine in position 527 of 16S rRNA. This is Ribosomal RNA small subunit methyltransferase G from Shewanella baltica (strain OS223).